A 303-amino-acid chain; its full sequence is Elongation factor Ts (303 aa).

Residues 80–83 (TDFV) are involved in Mg(2+) ion dislocation from EF-Tu.

Belongs to the EF-Ts family.

It localises to the cytoplasm. Associates with the EF-Tu.GDP complex and induces the exchange of GDP to GTP. It remains bound to the aminoacyl-tRNA.EF-Tu.GTP complex up to the GTP hydrolysis stage on the ribosome. This is Elongation factor Ts from Clostridium perfringens (strain ATCC 13124 / DSM 756 / JCM 1290 / NCIMB 6125 / NCTC 8237 / Type A).